A 185-amino-acid chain; its full sequence is Large ribosomal subunit protein uL22 (185 aa).

Positions 158 to 185 (AKPREDEPHKKKISKKKLARAKEKMLRE) are disordered. Residues 167–176 (KKKISKKKLA) are compositionally biased toward basic residues.

It belongs to the universal ribosomal protein uL22 family.

The polypeptide is Large ribosomal subunit protein uL22 (RpL17) (Diaphorina citri (Asian citrus psyllid)).